The primary structure comprises 260 residues: CD40 ligand (260 aa).

Topologically, residues 1 to 22 (MIETYSQTAPRSVATGPPVSMK) are cytoplasmic. A helical; Signal-anchor for type II membrane protein transmembrane segment spans residues 23-46 (IFMYLLTVFLITQMIGSALFAVYL). Over 47–260 (HRRLDKIEDE…GFTSFGLLKL (214 aa)) the chain is Extracellular. The region spanning 121-260 (IAAHVISEAS…GFTSFGLLKL (140 aa)) is the THD domain. Cysteine 177 and cysteine 217 form a disulfide bridge. Residue asparagine 239 is glycosylated (N-linked (GlcNAc...) asparagine).

Belongs to the tumor necrosis factor family. Homotrimer. Interacts with CD28. CD40 ligand, soluble form: Exists as either a monomer or a homotrimer. Forms a ternary complex between CD40 and integrins for CD40-CD40LG signaling. Post-translationally, the soluble form derives from the membrane form by proteolytic processing.

The protein resides in the cell membrane. It is found in the cell surface. Its subcellular location is the secreted. Its function is as follows. Cytokine that acts as a ligand to CD40/TNFRSF5. Costimulates T-cell proliferation and cytokine production. Its cross-linking on T-cells generates a costimulatory signal which enhances the production of IL4 and IL10 in conjunction with the TCR/CD3 ligation and CD28 costimulation. Induces the activation of NF-kappa-B. Induces the activation of kinases MAPK8 and PAK2 in T-cells. Mediates B-cell proliferation in the absence of co-stimulus as well as IgE production in the presence of IL4. Involved in immunoglobulin class switching. Acts as a ligand for integrins, specifically ITGA5:ITGB1 and ITGAV:ITGB3; both integrins and the CD40 receptor are required for activation of CD40-CD40LG signaling, which have cell-type dependent effects, such as B-cell activation, NF-kappa-B signaling and anti-apoptotic signaling. In Canis lupus familiaris (Dog), this protein is CD40 ligand (CD40LG).